Reading from the N-terminus, the 361-residue chain is GTP 3',8-cyclase (361 aa).

Residues 1–30 are disordered; it reads MTVTALGLPTVARSTGDGSAGASPAPADGP. The segment covering 16–30 has biased composition (low complexity); it reads GDGSAGASPAPADGP. A Radical SAM core domain is found at 34-252; the sequence is TYGRAATDLR…LQQHFELTPD (219 aa). GTP is bound at residue Arg-43. The [4Fe-4S] cluster site is built by Cys-50 and Cys-54. S-adenosyl-L-methionine is bound at residue Tyr-56. Cys-57 contacts [4Fe-4S] cluster. Arg-94 contributes to the GTP binding site. S-adenosyl-L-methionine is bound at residue Gly-98. Residue Thr-125 participates in GTP binding. Ser-149 contributes to the S-adenosyl-L-methionine binding site. Residue Lys-186 coordinates GTP. S-adenosyl-L-methionine is bound at residue Met-220. Positions 288 and 291 each coordinate [4Fe-4S] cluster. 293–295 contributes to the GTP binding site; sequence RTR. Cys-305 contributes to the [4Fe-4S] cluster binding site.

Belongs to the radical SAM superfamily. MoaA family. As to quaternary structure, monomer and homodimer. [4Fe-4S] cluster is required as a cofactor.

The enzyme catalyses GTP + AH2 + S-adenosyl-L-methionine = (8S)-3',8-cyclo-7,8-dihydroguanosine 5'-triphosphate + 5'-deoxyadenosine + L-methionine + A + H(+). It functions in the pathway cofactor biosynthesis; molybdopterin biosynthesis. Its function is as follows. Catalyzes the cyclization of GTP to (8S)-3',8-cyclo-7,8-dihydroguanosine 5'-triphosphate. The polypeptide is GTP 3',8-cyclase (Mycolicibacterium smegmatis (strain ATCC 700084 / mc(2)155) (Mycobacterium smegmatis)).